A 377-amino-acid chain; its full sequence is tRNA-specific 2-thiouridylase MnmA (377 aa).

Residues 22–29 and M48 contribute to the ATP site; that span reads GMSGGVDS. Residues 108–110 form an interaction with target base in tRNA region; sequence NPD. C113 serves as the catalytic Nucleophile. C113 and C210 form a disulfide bridge. G138 contacts ATP. The tract at residues 160 to 162 is interaction with tRNA; sequence KDQ. Residue C210 is the Cysteine persulfide intermediate of the active site. Positions 322–323 are interaction with tRNA; that stretch reads RY.

Belongs to the MnmA/TRMU family.

Its subcellular location is the cytoplasm. It carries out the reaction S-sulfanyl-L-cysteinyl-[protein] + uridine(34) in tRNA + AH2 + ATP = 2-thiouridine(34) in tRNA + L-cysteinyl-[protein] + A + AMP + diphosphate + H(+). Catalyzes the 2-thiolation of uridine at the wobble position (U34) of tRNA, leading to the formation of s(2)U34. The polypeptide is tRNA-specific 2-thiouridylase MnmA (Shewanella amazonensis (strain ATCC BAA-1098 / SB2B)).